Consider the following 192-residue polypeptide: 3-isopropylmalate dehydratase small subunit (192 aa).

Belongs to the LeuD family. LeuD type 1 subfamily. In terms of assembly, heterodimer of LeuC and LeuD.

It carries out the reaction (2R,3S)-3-isopropylmalate = (2S)-2-isopropylmalate. The protein operates within amino-acid biosynthesis; L-leucine biosynthesis; L-leucine from 3-methyl-2-oxobutanoate: step 2/4. Catalyzes the isomerization between 2-isopropylmalate and 3-isopropylmalate, via the formation of 2-isopropylmaleate. This chain is 3-isopropylmalate dehydratase small subunit, found in Zymomonas mobilis subsp. mobilis (strain ATCC 31821 / ZM4 / CP4).